Here is a 222-residue protein sequence, read N- to C-terminus: Deoxyribose-phosphate aldolase (222 aa).

Residue aspartate 92 is the Proton donor/acceptor of the active site. Catalysis depends on lysine 156, which acts as the Schiff-base intermediate with acetaldehyde. The active-site Proton donor/acceptor is lysine 185.

This sequence belongs to the DeoC/FbaB aldolase family. DeoC type 1 subfamily. Homodimer.

It is found in the cytoplasm. It carries out the reaction 2-deoxy-D-ribose 5-phosphate = D-glyceraldehyde 3-phosphate + acetaldehyde. It participates in carbohydrate degradation; 2-deoxy-D-ribose 1-phosphate degradation; D-glyceraldehyde 3-phosphate and acetaldehyde from 2-deoxy-alpha-D-ribose 1-phosphate: step 2/2. With respect to regulation, shows high stability to high concentrations of acetaldehyde. Its function is as follows. Catalyzes a reversible aldol reaction between acetaldehyde and D-glyceraldehyde 3-phosphate to generate 2-deoxy-D-ribose 5-phosphate. This Aciduliprofundum boonei (strain DSM 19572 / T469) protein is Deoxyribose-phosphate aldolase.